A 132-amino-acid chain; its full sequence is Small ribosomal subunit protein uS8 (132 aa).

Belongs to the universal ribosomal protein uS8 family. As to quaternary structure, part of the 30S ribosomal subunit. Contacts proteins S5 and S12.

Its function is as follows. One of the primary rRNA binding proteins, it binds directly to 16S rRNA central domain where it helps coordinate assembly of the platform of the 30S subunit. The protein is Small ribosomal subunit protein uS8 of Exiguobacterium sp. (strain ATCC BAA-1283 / AT1b).